A 60-amino-acid polypeptide reads, in one-letter code: Conotoxin PnMRCL-022 (60 aa).

The N-terminal stretch at 1–22 is a signal peptide; that stretch reads MRCLPVFVILLLLIASTPSVNA. Positions 23–45 are excised as a propeptide; sequence RPKTKDLASFHDNAKRTQHIFWS.

It belongs to the conotoxin T superfamily. Post-translationally, contains 2 disulfide bonds that can be either 'C1-C3, C2-C4' or 'C1-C4, C2-C3', since these disulfide connectivities have been observed for conotoxins with cysteine framework V (for examples, see AC P0DQQ7 and AC P81755). Expressed by the venom duct.

It localises to the secreted. The chain is Conotoxin PnMRCL-022 from Conus pennaceus (Feathered cone).